Here is a 979-residue protein sequence, read N- to C-terminus: Chromosome partition protein Smc (979 aa).

33–40 (PNGSGKSN) serves as a coordination point for ATP. Residues 169–400 (SKYKLDKEEA…INILKQQFEN (232 aa)) adopt a coiled-coil conformation. The 120-residue stretch at 419–538 (DGYIGLASEL…DNVDNANRIA (120 aa)) folds into the SMC hinge domain. Coiled coils occupy residues 572-716 (ILNY…HSDS) and 750-818 (SLDL…DKII).

It belongs to the SMC family. Homodimer.

The protein resides in the cytoplasm. In terms of biological role, required for chromosome condensation and partitioning. The polypeptide is Chromosome partition protein Smc (Mesomycoplasma hyorhinis (Mycoplasma hyorhinis)).